The primary structure comprises 101 residues: Large ribosomal subunit protein eL31 (101 aa).

Belongs to the eukaryotic ribosomal protein eL31 family.

This Ignicoccus hospitalis (strain KIN4/I / DSM 18386 / JCM 14125) protein is Large ribosomal subunit protein eL31.